A 233-amino-acid polypeptide reads, in one-letter code: Purine nucleoside phosphorylase DeoD-type (233 aa).

Histidine 4 contacts a purine D-ribonucleoside. Residues glycine 20, arginine 24, arginine 43, and 87–90 (RIGT) each bind phosphate. Residues 179 to 181 (EME) and 203 to 204 (SD) each bind a purine D-ribonucleoside. Aspartate 204 acts as the Proton donor in catalysis.

It belongs to the PNP/UDP phosphorylase family. Homohexamer; trimer of homodimers.

The enzyme catalyses a purine D-ribonucleoside + phosphate = a purine nucleobase + alpha-D-ribose 1-phosphate. The catalysed reaction is a purine 2'-deoxy-D-ribonucleoside + phosphate = a purine nucleobase + 2-deoxy-alpha-D-ribose 1-phosphate. Its function is as follows. Catalyzes the reversible phosphorolytic breakdown of the N-glycosidic bond in the beta-(deoxy)ribonucleoside molecules, with the formation of the corresponding free purine bases and pentose-1-phosphate. The chain is Purine nucleoside phosphorylase DeoD-type from Helicobacter pylori (strain P12).